The primary structure comprises 526 residues: Organic cation/carnitine transporter 4 (526 aa).

At 1–52 (MESPEDRNGNDVRQPLLEKIPVKKEAEGEERLCIDEMLQRYCGEFGRWQLKH) the chain is on the cytoplasmic side. The chain crosses the membrane as a helical span at residues 53–73 (FVLTCIAWALEAFHTMVMIFA). Topologically, residues 74–123 (DQEPEWRCVGSDCRVGSLNCELDPSSWEWTAGKGSSTVSEWGLICGDKYK) are extracellular. Residues 124–144 (VGLVQALFFAGCMIGAGVFGH) form a helical membrane-spanning segment. Residues 145–153 (LSDSKLGRK) lie on the Cytoplasmic side of the membrane. Residues 154-174 (GSLTVVCIINAIFGIATAFSP) traverse the membrane as a helical segment. At 175–179 (NYWTY) the chain is on the extracellular side. The helical transmembrane segment at 180-200 (VVLRFLTGFSTGGVGLTAFVL) threads the bilayer. 201–208 (ATEPIGPS) provides a ligand contact to ATP. Over 201–214 (ATEPIGPSKRGVAG) the chain is Cytoplasmic. Residues 215–235 (MSTFYFFSAGIAVLSGIAYVF) traverse the membrane as a helical segment. Topologically, residues 236 to 240 (RSWRE) are extracellular. A helical transmembrane segment spans residues 241 to 261 (LFIVSSLPSLLFLLIVIPFIS). The Cytoplasmic segment spans residues 262–331 (ESPRWYLVRG…ILSPLMRMRL (70 aa)). Residues 332 to 352 (VISVAISFTVSIVYYGLSLNV) traverse the membrane as a helical segment. Over 353–360 (GNLKTNLY) the chain is Extracellular. Residues 361–381 (LNVFVNAVSEMPAFAITAVLL) form a helical membrane-spanning segment. Over 382–390 (DKYGRKPLS) the chain is Cytoplasmic. A helical transmembrane segment spans residues 391-411 (IGTQWFSCVFCLVGFSVWGAG). The Extracellular segment spans residues 412–418 (PWKSVRM). Residues 419–439 (VSGVLGIFGMAGTYNLLFIYI) traverse the membrane as a helical segment. At 440–451 (AELFPTVVRNAA) the chain is on the cytoplasmic side. A helical membrane pass occupies residues 452-472 (LGCATQAAQMGAILAPFVVVL). The Extracellular segment spans residues 473 to 475 (GEE). The chain crosses the membrane as a helical span at residues 476–496 (LPFGVFAVCGLVGGGLAFYLP). Topologically, residues 497 to 526 (ETLNKPLYDTMFGMHEAESESNRERGEVIC) are cytoplasmic.

Belongs to the major facilitator (TC 2.A.1) superfamily. Organic cation transporter (TC 2.A.1.19) family. In terms of tissue distribution, mostly expressed in siliques, and, to a lower extent, in stems, leaves, flowers and siliques. Present in pollen. In the stems of secondary inflorescences present in the phloem cells and xylem parenchyma cells.

The protein localises to the vacuole membrane. Its function is as follows. High affinity carnitine transporter involved in the active cellular uptake of carnitine. Also transports organic cations. In Arabidopsis thaliana (Mouse-ear cress), this protein is Organic cation/carnitine transporter 4 (OCT4).